A 1000-amino-acid polypeptide reads, in one-letter code: Vacuolar sorting protein 39 (1000 aa).

The region spanning 16-282 (PARIDAVESY…RRLVKSNNAV (267 aa)) is the CNH domain. Residues 394–413 (DEASLSRGSSGISDDMESSS) form a disordered region. A CHCR repeat occupies 607–796 (YSMLVLESCP…YLNPKKSAKD (190 aa)). Residues 844–864 (GLSSSTDSGRSDVDTEEPLEE) form a disordered region.

Belongs to the VAM6/VPS39 family. Homooligomer. Component of the homotypic fusion and vacuole protein sorting (HOPS) complex composed of the class C Vps core proteins VPS11, VCL1, VPS18 and VPS33, which in HOPS further associates with VPS39 and VPS41. Interacts directly with VPS11. Binds to RABG3B.

It is found in the cytoplasm. It localises to the vacuole membrane. Essential protein required during embryogenesis. Believed to act in part as a component of the putative HOPS endosomal tethering complex. HOPS is required for the central vacuole formation. May play a role in clustering and fusion of late endosomes and lysosomes. Plays a role in vesicle-mediated protein trafficking to lysosomal compartments including the endocytic membrane transport and autophagic pathways. Required for fusion of endosomes and autophagosomes with lysosomes. The sequence is that of Vacuolar sorting protein 39 from Arabidopsis thaliana (Mouse-ear cress).